Consider the following 309-residue polypeptide: Protein FdhE homolog (309 aa).

The protein belongs to the FdhE family.

Its subcellular location is the cytoplasm. In terms of biological role, necessary for formate dehydrogenase activity. The sequence is that of Protein FdhE homolog from Pectobacterium atrosepticum (strain SCRI 1043 / ATCC BAA-672) (Erwinia carotovora subsp. atroseptica).